Reading from the N-terminus, the 277-residue chain is Eukaryotic translation initiation factor 3 subunit J (277 aa).

A disordered region spans residues 1-80 (MSWDDEDFAV…PAATKNTMLD (80 aa)). The segment covering 23–43 (WDDEFAENDDEPVLESWEDEE) has biased composition (acidic residues). Residues 50-75 (KAAAAAAAKAPKKASPSPAATPAATK) show a composition bias toward low complexity. The stretch at 199-230 (TVENIRQTIATLNVLMKDKEREERQARLAKVK) forms a coiled coil. A disordered region spans residues 257 to 277 (DNDFDLGGNDNFDDFGEDDFM). Acidic residues predominate over residues 267–277 (NFDDFGEDDFM).

This sequence belongs to the eIF-3 subunit J family. As to quaternary structure, component of the eukaryotic translation initiation factor 3 (eIF-3) complex.

It localises to the cytoplasm. Functionally, component of the eukaryotic translation initiation factor 3 (eIF-3) complex, which is involved in protein synthesis of a specialized repertoire of mRNAs and, together with other initiation factors, stimulates binding of mRNA and methionyl-tRNAi to the 40S ribosome. The eIF-3 complex specifically targets and initiates translation of a subset of mRNAs involved in cell proliferation. In Kluyveromyces lactis (strain ATCC 8585 / CBS 2359 / DSM 70799 / NBRC 1267 / NRRL Y-1140 / WM37) (Yeast), this protein is Eukaryotic translation initiation factor 3 subunit J.